A 510-amino-acid polypeptide reads, in one-letter code: NAD(P)H-quinone oxidoreductase subunit 2 A, chloroplastic (510 aa).

13 helical membrane passes run 24–44 (LLLF…GLIL), 57–77 (IPWL…ALLF), 99–119 (IFQF…VEYI), 124–144 (MAIT…MFLC), 149–169 (LITI…LSGY), 183–203 (YLLM…WLYG), 227–247 (PGIS…LSPA), 295–315 (WHLL…LIAI), 323–343 (MLAY…IVGD), 354–374 (YMLF…LFGL), 395–415 (ALSL…AGFF), 418–438 (LYLF…IGLL), and 484–504 (MIVC…IIAI).

Belongs to the complex I subunit 2 family. NDH is composed of at least 16 different subunits, 5 of which are encoded in the nucleus.

It localises to the plastid. The protein resides in the chloroplast thylakoid membrane. The catalysed reaction is a plastoquinone + NADH + (n+1) H(+)(in) = a plastoquinol + NAD(+) + n H(+)(out). The enzyme catalyses a plastoquinone + NADPH + (n+1) H(+)(in) = a plastoquinol + NADP(+) + n H(+)(out). Its function is as follows. NDH shuttles electrons from NAD(P)H:plastoquinone, via FMN and iron-sulfur (Fe-S) centers, to quinones in the photosynthetic chain and possibly in a chloroplast respiratory chain. The immediate electron acceptor for the enzyme in this species is believed to be plastoquinone. Couples the redox reaction to proton translocation, and thus conserves the redox energy in a proton gradient. The sequence is that of NAD(P)H-quinone oxidoreductase subunit 2 A, chloroplastic from Solanum bulbocastanum (Wild potato).